The chain runs to 224 residues: Beta-casein (224 aa).

A signal peptide spans 1 to 15; that stretch reads MKVLILACLVALALA. Residues Ser-30, Ser-32, Ser-33, and Ser-34 each carry the phosphoserine modification.

The protein belongs to the beta-casein family. In terms of tissue distribution, mammary gland specific. Secreted in milk.

The protein localises to the secreted. Its function is as follows. Important role in determination of the surface properties of the casein micelles. This Bubalus bubalis (Domestic water buffalo) protein is Beta-casein (CSN2).